We begin with the raw amino-acid sequence, 460 residues long: Transcription factor AP-2-beta (460 aa).

A Glycyl lysine isopeptide (Lys-Gly) (interchain with G-Cter in SUMO) cross-link involves residue Lys21. The interval 30–139 is disordered; it reads HDGVPSHSSR…PQLSGLDPRR (110 aa). Polar residues predominate over residues 35–51; that stretch reads SHSSRLSQLGSVSQGPY. The segment covering 121–132 has biased composition (low complexity); sequence LLPQPRAALPQL. Residue Ser258 is modified to Phosphoserine; by PKA. Residues 435–460 are disordered; that stretch reads NTTTNRHTSGEGPGSKTGDKEEKHRK. A compositionally biased stretch (basic and acidic residues) spans 451 to 460; that stretch reads TGDKEEKHRK.

This sequence belongs to the AP-2 family. In terms of assembly, binds DNA as a dimer. Can form homodimers or heterodimers with other AP-2 family members. Interacts with CITED4. Interacts with UBE2I. Interacts with KCTD1; this interaction represses transcription activation. Interacts with CITED2 (via C-terminus); the interaction stimulates TFAP2B-transcriptional activity. Post-translationally, sumoylated on Lys-21; which inhibits transcriptional activity.

The protein resides in the nucleus. In terms of biological role, sequence-specific DNA-binding protein that interacts with inducible viral and cellular enhancer elements to regulate transcription of selected genes. AP-2 factors bind to the consensus sequence 5'-GCCNNNGGC-3' and activate genes involved in a large spectrum of important biological functions including proper eye, face, body wall, limb and neural tube development. They also suppress a number of genes including MCAM/MUC18, C/EBP alpha and MYC. AP-2-beta appears to be required for normal face and limb development and for proper terminal differentiation and function of renal tubular epithelia. In Canis lupus familiaris (Dog), this protein is Transcription factor AP-2-beta (TFAP2B).